Consider the following 416-residue polypeptide: Neamine transaminase NeoN (416 aa).

N6-(pyridoxal phosphate)lysine is present on Lys-231.

The protein belongs to the class-III pyridoxal-phosphate-dependent aminotransferase family. Pyridoxal 5'-phosphate serves as cofactor.

It carries out the reaction neomycin C + 2-oxoglutarate = 6'''-deamino-6'''-oxoneomycin C + L-glutamate. The catalysed reaction is neamine + 2-oxoglutarate = 6'-oxoparomamine + L-glutamate. Its pathway is antibiotic biosynthesis; neomycin biosynthesis. Its function is as follows. 6'-oxoglucosaminyl:L-glutamate aminotransferase that catalyzes pyridoxal-5'-phosphate-mediated transamination for the conversion of paromamine to neamine in the biosynthetic pathway of neomycin. Also able to catalyze deamination at C-6''' of neomycin. The chain is Neamine transaminase NeoN (neoN) from Streptomyces fradiae (Streptomyces roseoflavus).